A 593-amino-acid polypeptide reads, in one-letter code: Arginine--tRNA ligase (593 aa).

Positions 123 to 133 match the 'HIGH' region motif; sequence PNVAKPMHVGH.

This sequence belongs to the class-I aminoacyl-tRNA synthetase family. As to quaternary structure, monomer.

It localises to the cytoplasm. The enzyme catalyses tRNA(Arg) + L-arginine + ATP = L-arginyl-tRNA(Arg) + AMP + diphosphate. This Phenylobacterium zucineum (strain HLK1) protein is Arginine--tRNA ligase.